We begin with the raw amino-acid sequence, 156 residues long: Ribosomally synthesized cyclic peptide victorin precursosr vicA1 (156 aa).

Positions methionine 1 to alanine 21 are cleaved as a signal peptide. 7 consecutive propeptides follow at residues methionine 22–arginine 36, lysine 43–arginine 55, lysine 62–arginine 74, lysine 81–arginine 93, lysine 100–arginine 112, lysine 119–arginine 131, and lysine 138–arginine 150.

In terms of processing, vicA1 is processed by several endopeptidases including kexin proteases as well as the cluster-specific peptidases vicP1 and vicP2 to produce 7 identical copies of the hexapeptide Gly-Leu-Lys-Leu-Ala-Phe, that are further modified to yield victorins. After being excised from the precursor peptide, the core peptides are cyclized and modified post-translationally by enzymes encoded within the gene cluster. The ustYa family protein vicYb is required for the formation of the macrocycle in victorin and the copper amine oxidases (CAOs) vicK1 and vicK2 are responsible for converting victorin to the active form by oxidizing the N-terminal glycyl residue in the peptides to glyoxylate. Relaxed substrate specificity of enzymes in the victorin biosynthetic pathway results in a metabolic grid that produces a set of analogs including victorinines B, C, E or HV-toxin M.

It functions in the pathway mycotoxin biosynthesis. Ribosomally synthesized cyclic peptide victorin precursor, part of the gene cluster that mediates the biosynthesis of the secondary metabolite victorin, the molecular basis for Victoria blight of oats. The vicA1 translated product contains a 7-fold repeated peptide embedding the hexapeptide Gly-Leu-Lys-Leu-Ala-Phe, that is converted into the cyclic victorin. The polypeptide is Ribosomally synthesized cyclic peptide victorin precursosr vicA1 (Bipolaris victoriae (strain FI3) (Victoria blight of oats agent)).